The sequence spans 658 residues: Biosynthetic arginine decarboxylase (658 aa).

Position 127 is an N6-(pyridoxal phosphate)lysine (lysine 127). Phenylalanine 307 to tyrosine 317 lines the substrate pocket.

The protein belongs to the Orn/Lys/Arg decarboxylase class-II family. SpeA subfamily. As to quaternary structure, homotetramer. The cofactor is Mg(2+). Pyridoxal 5'-phosphate is required as a cofactor.

The protein localises to the periplasm. It carries out the reaction L-arginine + H(+) = agmatine + CO2. Its pathway is amine and polyamine biosynthesis; agmatine biosynthesis; agmatine from L-arginine: step 1/1. In terms of biological role, catalyzes the biosynthesis of agmatine from arginine. In Escherichia coli O157:H7, this protein is Biosynthetic arginine decarboxylase (speA).